We begin with the raw amino-acid sequence, 92 residues long: Arrestin-C (92 aa).

This sequence belongs to the arrestin family. As to quaternary structure, homodimer; disulfide-linked in response to retinal illumination. Interacts with CXCR4; the interaction is dependent on the C-terminal phosphorylation of CXCR4 and modulates the calcium ion mobilization activity of CXCR4. Interacts with GPR84. In terms of tissue distribution, retina and pineal gland.

The protein resides in the photoreceptor inner segment. It is found in the cell projection. The protein localises to the cilium. Its subcellular location is the photoreceptor outer segment. In terms of biological role, may play a role in an as yet undefined retina-specific signal transduction. Could bind to photoactivated-phosphorylated red/green opsins. This is Arrestin-C (Arr3) from Rattus norvegicus (Rat).